The primary structure comprises 219 residues: Envelope protein UL45 homolog (219 aa).

Residues 1 to 57 are Intravirion-facing; sequence MEDYKLLQLETATVDAQAPPLPTKTVPVFAPPLSTPPQPNELVYTKRRRTKRKAKCR. The chain crosses the membrane as a helical; Signal-anchor for type II membrane protein span at residues 58-78; sequence CLFFTMGMFALGVLMTTAILV. The Virion surface portion of the chain corresponds to 79–219; the sequence is STFILTVPIG…RLDHIIPFPR (141 aa). Residues N113, N120, and N138 are each glycosylated (N-linked (GlcNAc...) asparagine; by host).

Belongs to the herpesviridae HHV-1 UL45 family. Post-translationally, N-glycosylated.

It is found in the virion membrane. The sequence is that of Envelope protein UL45 homolog from Equine herpesvirus 1 (strain Ab4p) (EHV-1).